The sequence spans 306 residues: Foldase protein PrsA (306 aa).

Positions 1-20 are cleaved as a signal peptide; it reads MRRKIALFLALIFVGVSLVS. Cys21 is lipidated: N-palmitoyl cysteine. Cys21 is lipidated: S-diacylglycerol cysteine. The PpiC domain maps to 165–255; the sequence is FEVMRARHIL…YGYHIIKSEG (91 aa).

Belongs to the PrsA family.

It is found in the cell membrane. It catalyses the reaction [protein]-peptidylproline (omega=180) = [protein]-peptidylproline (omega=0). Plays a major role in protein secretion by helping the post-translocational extracellular folding of several secreted proteins. The sequence is that of Foldase protein PrsA from Caldanaerobacter subterraneus subsp. tengcongensis (strain DSM 15242 / JCM 11007 / NBRC 100824 / MB4) (Thermoanaerobacter tengcongensis).